The chain runs to 139 residues: MGKVNKTDREWQRELSPEEYRITRQKGTEPAFTGQYWNTKQHGTYVCRCCGAELFSSDAKYDSGCGWPSFFRPLNGSVIDEHEDLTHGMVRTEIVCHDCEAHLGHVFEDGPQPTGLRYCVNSASLQLKTQEKNDEETYP.

Positions Asp-8–Gln-130 constitute a MsrB domain. Residues Cys-47, Cys-50, Cys-96, and Cys-99 each contribute to the Zn(2+) site. The Nucleophile role is filled by Cys-119.

This sequence belongs to the MsrB Met sulfoxide reductase family. Requires Zn(2+) as cofactor.

The catalysed reaction is L-methionyl-[protein] + [thioredoxin]-disulfide + H2O = L-methionyl-(R)-S-oxide-[protein] + [thioredoxin]-dithiol. The sequence is that of Peptide methionine sulfoxide reductase MsrB from Acinetobacter baumannii (strain AB307-0294).